The chain runs to 299 residues: Protease HtpX homolog (299 aa).

2 helical membrane-spanning segments follow: residues I15 to F35 and G39 to F59. A Zn(2+)-binding site is contributed by H143. E144 is an active-site residue. Residue H147 coordinates Zn(2+). The next 2 helical transmembrane spans lie at I158 to W178 and I198 to V218. E227 is a Zn(2+) binding site.

The protein belongs to the peptidase M48B family. Zn(2+) is required as a cofactor.

The protein localises to the cell membrane. The protein is Protease HtpX homolog of Streptococcus pneumoniae serotype 19F (strain G54).